A 414-amino-acid chain; its full sequence is Serine/threonine transporter SstT (414 aa).

8 helical membrane-spanning segments follow: residues 22-42 (GLVL…TIGF), 54-74 (IFVK…VMAA), 89-109 (IIVL…IAGF), 148-168 (AIFK…GLAL), 189-209 (IVHV…AETL), 223-243 (LLAV…PILV), 305-325 (MAGA…TLGL), and 337-357 (IVAA…LLLI).

The protein belongs to the dicarboxylate/amino acid:cation symporter (DAACS) (TC 2.A.23) family.

The protein localises to the cell inner membrane. It catalyses the reaction L-serine(in) + Na(+)(in) = L-serine(out) + Na(+)(out). The catalysed reaction is L-threonine(in) + Na(+)(in) = L-threonine(out) + Na(+)(out). In terms of biological role, involved in the import of serine and threonine into the cell, with the concomitant import of sodium (symport system). This Haemophilus influenzae (strain PittEE) protein is Serine/threonine transporter SstT.